A 149-amino-acid polypeptide reads, in one-letter code: D-aminoacyl-tRNA deacylase (149 aa).

The short motif at 137–138 is the Gly-cisPro motif, important for rejection of L-amino acids element; it reads GP.

This sequence belongs to the DTD family. In terms of assembly, homodimer.

The protein localises to the cytoplasm. The enzyme catalyses glycyl-tRNA(Ala) + H2O = tRNA(Ala) + glycine + H(+). The catalysed reaction is a D-aminoacyl-tRNA + H2O = a tRNA + a D-alpha-amino acid + H(+). Functionally, an aminoacyl-tRNA editing enzyme that deacylates mischarged D-aminoacyl-tRNAs. Also deacylates mischarged glycyl-tRNA(Ala), protecting cells against glycine mischarging by AlaRS. Acts via tRNA-based rather than protein-based catalysis; rejects L-amino acids rather than detecting D-amino acids in the active site. By recycling D-aminoacyl-tRNA to D-amino acids and free tRNA molecules, this enzyme counteracts the toxicity associated with the formation of D-aminoacyl-tRNA entities in vivo and helps enforce protein L-homochirality. This is D-aminoacyl-tRNA deacylase from Clostridium acetobutylicum (strain ATCC 824 / DSM 792 / JCM 1419 / IAM 19013 / LMG 5710 / NBRC 13948 / NRRL B-527 / VKM B-1787 / 2291 / W).